The primary structure comprises 228 residues: tRNA (guanine-N(1)-)-methyltransferase (228 aa).

S-adenosyl-L-methionine-binding positions include G111 and 135 to 140 (LGDYVL).

Belongs to the RNA methyltransferase TrmD family. As to quaternary structure, homodimer.

It localises to the cytoplasm. It catalyses the reaction guanosine(37) in tRNA + S-adenosyl-L-methionine = N(1)-methylguanosine(37) in tRNA + S-adenosyl-L-homocysteine + H(+). Functionally, specifically methylates guanosine-37 in various tRNAs. The sequence is that of tRNA (guanine-N(1)-)-methyltransferase from Clavibacter sepedonicus (Clavibacter michiganensis subsp. sepedonicus).